We begin with the raw amino-acid sequence, 256 residues long: ATP synthase peripheral stalk subunit b, mitochondrial (256 aa).

A mitochondrion-targeting transit peptide spans 1–42 (MLSRVVLSAAATAAPCLKNAAVLGPGVLQATRVFHTGQPRLA). An N6-succinyllysine modification is found at lysine 131. N6-acetyllysine occurs at positions 139, 154, 162, 221, 233, and 244.

This sequence belongs to the eukaryotic ATPase B chain family. Component of the ATP synthase complex composed at least of ATP5F1A/subunit alpha, ATP5F1B/subunit beta, ATP5MC1/subunit c (homooctomer), MT-ATP6/subunit a, MT-ATP8/subunit 8, ATP5ME/subunit e, ATP5MF/subunit f, ATP5MG/subunit g, ATP5MK/subunit k, ATP5MJ/subunit j, ATP5F1C/subunit gamma, ATP5F1D/subunit delta, ATP5F1E/subunit epsilon, ATP5PF/subunit F6, ATP5PB/subunit b, ATP5PD/subunit d, ATP5PO/subunit OSCP. ATP synthase complex consists of a soluble F(1) head domain (subunits alpha(3) and beta(3)) - the catalytic core - and a membrane F(0) domain - the membrane proton channel (subunits c, a, 8, e, f, g, k and j). These two domains are linked by a central stalk (subunits gamma, delta, and epsilon) rotating inside the F1 region and a stationary peripheral stalk (subunits F6, b, d, and OSCP).

The protein localises to the mitochondrion. It is found in the mitochondrion inner membrane. In terms of biological role, subunit b, of the mitochondrial membrane ATP synthase complex (F(1)F(0) ATP synthase or Complex V) that produces ATP from ADP in the presence of a proton gradient across the membrane which is generated by electron transport complexes of the respiratory chain. ATP synthase complex consist of a soluble F(1) head domain - the catalytic core - and a membrane F(1) domain - the membrane proton channel. These two domains are linked by a central stalk rotating inside the F(1) region and a stationary peripheral stalk. During catalysis, ATP synthesis in the catalytic domain of F(1) is coupled via a rotary mechanism of the central stalk subunits to proton translocation. In vivo, can only synthesize ATP although its ATP hydrolase activity can be activated artificially in vitro. Part of the complex F(0) domain. Part of the complex F(0) domain and the peripheric stalk, which acts as a stator to hold the catalytic alpha(3)beta(3) subcomplex and subunit a/ATP6 static relative to the rotary elements. The chain is ATP synthase peripheral stalk subunit b, mitochondrial from Rattus norvegicus (Rat).